A 1128-amino-acid chain; its full sequence is DNA-directed RNA polymerase subunit Rpo2 (1128 aa).

DsDNA-binding positions include lysine 178, 181–182 (SN), lysine 206, 435–439 (RGQPN), and 1027–1032 (RFGEME). Zn(2+) is bound by residues cysteine 1061, cysteine 1064, cysteine 1079, and histidine 1082.

This sequence belongs to the RNA polymerase beta chain family. As to quaternary structure, part of the 13-subunit RNA polymerase complex. It depends on Zn(2+) as a cofactor.

The protein localises to the cytoplasm. The catalysed reaction is RNA(n) + a ribonucleoside 5'-triphosphate = RNA(n+1) + diphosphate. In terms of biological role, DNA-dependent RNA polymerase (RNAP) catalyzes the transcription of DNA into RNA using the four ribonucleoside triphosphates as substrates. This subunit is involved in DNA promoter recognition. The protein is DNA-directed RNA polymerase subunit Rpo2 of Saccharolobus shibatae (strain ATCC 51178 / DSM 5389 / JCM 8931 / NBRC 15437 / B12) (Sulfolobus shibatae).